Reading from the N-terminus, the 394-residue chain is Probable 6-phosphogluconolactonase ARB_02015 (394 aa).

Residues 1-21 (MKTVPFLSLLQAGILTSGIVA) form the signal peptide. The N-linked (GlcNAc...) asparagine glycan is linked to N51.

This sequence belongs to the cycloisomerase 2 family.

It localises to the secreted. It carries out the reaction 6-phospho-D-glucono-1,5-lactone + H2O = 6-phospho-D-gluconate + H(+). Its pathway is carbohydrate degradation; pentose phosphate pathway; D-ribulose 5-phosphate from D-glucose 6-phosphate (oxidative stage): step 2/3. In terms of biological role, catalyzes the hydrolysis of 6-phosphogluconolactone to 6-phosphogluconate. The chain is Probable 6-phosphogluconolactonase ARB_02015 from Arthroderma benhamiae (strain ATCC MYA-4681 / CBS 112371) (Trichophyton mentagrophytes).